We begin with the raw amino-acid sequence, 512 residues long: ETS translocation variant 3 (512 aa).

Residues 35–116 (IQLWHFILEL…KGKRFTYKFN (82 aa)) constitute a DNA-binding region (ETS). The tract at residues 138–196 (QSAPPVPTASSRFHFPPLDTHSPTSDVQPGRFSASSLTASGQESSNGTDRKAELSXLED) is disordered. A phosphoserine mark is found at Ser139, Ser159, and Ser315. Positions 158 to 184 (HSPTSDVQPGRFSASSLTASGQESSNG) are enriched in polar residues. The interval 341–512 (QFSIKLQPPP…QGLATAAADA (172 aa)) is disordered. Basic and acidic residues predominate over residues 380 to 406 (IKVEPASEKDAESLRQSAREKEEHTXE). A Glycyl lysine isopeptide (Lys-Gly) (interchain with G-Cter in SUMO2) cross-link involves residue Lys381. Lys388 carries the N6-acetyllysine; alternate modification. Lys388 participates in a covalent cross-link: Glycyl lysine isopeptide (Lys-Gly) (interchain with G-Cter in SUMO2); alternate. Residues 443 to 452 (EPLEVTEDIE) show a composition bias toward acidic residues. Composition is skewed to basic and acidic residues over residues 453–468 (DRPGKEPSAPEKKEDA) and 479–491 (RWNDDPEARELSK).

The protein belongs to the ETS family.

It is found in the nucleus. Its function is as follows. Transcriptional repressor that contribute to growth arrest during terminal macrophage differentiation by repressing target genes involved in Ras-dependent proliferation. Represses MMP1 promoter activity. The chain is ETS translocation variant 3 (ETV3) from Ateles geoffroyi (Black-handed spider monkey).